We begin with the raw amino-acid sequence, 348 residues long: Nicotinate-nucleotide--dimethylbenzimidazole phosphoribosyltransferase (348 aa).

Catalysis depends on Glu316, which acts as the Proton acceptor.

Belongs to the CobT family.

It carries out the reaction 5,6-dimethylbenzimidazole + nicotinate beta-D-ribonucleotide = alpha-ribazole 5'-phosphate + nicotinate + H(+). Its pathway is nucleoside biosynthesis; alpha-ribazole biosynthesis; alpha-ribazole from 5,6-dimethylbenzimidazole: step 1/2. In terms of biological role, catalyzes the synthesis of alpha-ribazole-5'-phosphate from nicotinate mononucleotide (NAMN) and 5,6-dimethylbenzimidazole (DMB). This chain is Nicotinate-nucleotide--dimethylbenzimidazole phosphoribosyltransferase, found in Xanthomonas campestris pv. campestris (strain 8004).